We begin with the raw amino-acid sequence, 805 residues long: Phenylalanine--tRNA ligase beta subunit (805 aa).

The 110-residue stretch at 39–148 folds into the tRNA-binding domain; the sequence is APPFTGVVVA…AALRPGTDIR (110 aa). A B5 domain is found at 399-474; the sequence is PVREPVRMRL…RVYGFERIPD (76 aa). The Mg(2+) site is built by Asp452, Asp458, Glu461, and Glu462. An FDX-ACB domain is found at 703–804; the sequence is SRQPAVVRDL…LVAAHNARQR (102 aa).

The protein belongs to the phenylalanyl-tRNA synthetase beta subunit family. Type 1 subfamily. As to quaternary structure, tetramer of two alpha and two beta subunits. It depends on Mg(2+) as a cofactor.

It localises to the cytoplasm. It catalyses the reaction tRNA(Phe) + L-phenylalanine + ATP = L-phenylalanyl-tRNA(Phe) + AMP + diphosphate + H(+). In Bordetella bronchiseptica (strain ATCC BAA-588 / NCTC 13252 / RB50) (Alcaligenes bronchisepticus), this protein is Phenylalanine--tRNA ligase beta subunit.